A 335-amino-acid chain; its full sequence is Tetraacyldisaccharide 4'-kinase (335 aa).

ATP is bound at residue valine 58–threonine 65.

The protein belongs to the LpxK family.

It carries out the reaction a lipid A disaccharide + ATP = a lipid IVA + ADP + H(+). It participates in glycolipid biosynthesis; lipid IV(A) biosynthesis; lipid IV(A) from (3R)-3-hydroxytetradecanoyl-[acyl-carrier-protein] and UDP-N-acetyl-alpha-D-glucosamine: step 6/6. Its function is as follows. Transfers the gamma-phosphate of ATP to the 4'-position of a tetraacyldisaccharide 1-phosphate intermediate (termed DS-1-P) to form tetraacyldisaccharide 1,4'-bis-phosphate (lipid IVA). The chain is Tetraacyldisaccharide 4'-kinase from Hydrogenovibrio crunogenus (strain DSM 25203 / XCL-2) (Thiomicrospira crunogena).